The following is a 226-amino-acid chain: Probable proteasome subunit beta type-7 (226 aa).

This sequence belongs to the peptidase T1B family. The 26S proteasome consists of a 20S proteasome core and two 19S regulatory subunits. The 20S proteasome core is composed of 28 subunits that are arranged in four stacked rings, resulting in a barrel-shaped structure. The two end rings are each formed by seven alpha subunits, and the two central rings are each formed by seven beta subunits. The catalytic chamber with the active sites is on the inside of the barrel.

The protein resides in the cytoplasm. It is found in the nucleus. Functionally, non-catalytic component of the proteasome which degrades poly-ubiquitinated proteins in the cytoplasm and in the nucleus. It is essential for the regulated turnover of proteins and for the removal of misfolded proteins. The proteasome is a multicatalytic proteinase complex that is characterized by its ability to cleave peptides with Arg, Phe, Tyr, Leu, and Glu adjacent to the leaving group at neutral or slightly basic pH. It has an ATP-dependent proteolytic activity. The polypeptide is Probable proteasome subunit beta type-7 (PRE4) (Encephalitozoon cuniculi (strain GB-M1) (Microsporidian parasite)).